The chain runs to 335 residues: Type 1 fimbrin D-mannose specific adhesin (335 aa).

An N-terminal signal peptide occupies residues 1 to 22 (MKIYSALLLAGTALFFTHPALA).

The protein belongs to the fimbrial protein family.

The protein resides in the fimbrium. Its function is as follows. Involved in regulation of length and mediation of adhesion of type 1 fimbriae (but not necessary for the production of fimbriae). A mannose-binding adhesin. This chain is Type 1 fimbrin D-mannose specific adhesin (fimH), found in Salmonella typhimurium (strain LT2 / SGSC1412 / ATCC 700720).